The primary structure comprises 87 residues: DNA-directed RNA polymerase subunit Rpo5 (87 aa).

Belongs to the archaeal Rpo5/eukaryotic RPB5 RNA polymerase subunit family. As to quaternary structure, part of the RNA polymerase complex.

It is found in the cytoplasm. The enzyme catalyses RNA(n) + a ribonucleoside 5'-triphosphate = RNA(n+1) + diphosphate. Its function is as follows. DNA-dependent RNA polymerase (RNAP) catalyzes the transcription of DNA into RNA using the four ribonucleoside triphosphates as substrates. The chain is DNA-directed RNA polymerase subunit Rpo5 from Thermoplasma acidophilum (strain ATCC 25905 / DSM 1728 / JCM 9062 / NBRC 15155 / AMRC-C165).